Consider the following 365-residue polypeptide: Peptide chain release factor 2 (365 aa).

Q252 bears the N5-methylglutamine mark.

It belongs to the prokaryotic/mitochondrial release factor family. In terms of processing, methylated by PrmC. Methylation increases the termination efficiency of RF2.

The protein localises to the cytoplasm. Peptide chain release factor 2 directs the termination of translation in response to the peptide chain termination codons UGA and UAA. The protein is Peptide chain release factor 2 of Yersinia pseudotuberculosis serotype O:1b (strain IP 31758).